Reading from the N-terminus, the 91-residue chain is Probable Fe(2+)-trafficking protein (91 aa).

The protein belongs to the Fe(2+)-trafficking protein family.

In terms of biological role, could be a mediator in iron transactions between iron acquisition and iron-requiring processes, such as synthesis and/or repair of Fe-S clusters in biosynthetic enzymes. In Histophilus somni (strain 129Pt) (Haemophilus somnus), this protein is Probable Fe(2+)-trafficking protein.